Reading from the N-terminus, the 287-residue chain is Acetyl-coenzyme A carboxylase carboxyl transferase subunit beta (287 aa).

Positions 25–287 (VWTKCSACEQ…KMLNTHVIEE (263 aa)) constitute a CoA carboxyltransferase N-terminal domain. The Zn(2+) site is built by Cys29, Cys32, Cys48, and Cys51. The segment at 29–51 (CSACEQVLYRAELERNLEVCPKC) adopts a C4-type zinc-finger fold.

The protein belongs to the AccD/PCCB family. In terms of assembly, acetyl-CoA carboxylase is a heterohexamer composed of biotin carboxyl carrier protein (AccB), biotin carboxylase (AccC) and two subunits each of ACCase subunit alpha (AccA) and ACCase subunit beta (AccD). Requires Zn(2+) as cofactor.

The protein localises to the cytoplasm. The enzyme catalyses N(6)-carboxybiotinyl-L-lysyl-[protein] + acetyl-CoA = N(6)-biotinyl-L-lysyl-[protein] + malonyl-CoA. It participates in lipid metabolism; malonyl-CoA biosynthesis; malonyl-CoA from acetyl-CoA: step 1/1. In terms of biological role, component of the acetyl coenzyme A carboxylase (ACC) complex. Biotin carboxylase (BC) catalyzes the carboxylation of biotin on its carrier protein (BCCP) and then the CO(2) group is transferred by the transcarboxylase to acetyl-CoA to form malonyl-CoA. In Aeromonas salmonicida (strain A449), this protein is Acetyl-coenzyme A carboxylase carboxyl transferase subunit beta.